A 138-amino-acid polypeptide reads, in one-letter code: Translation initiation factor 2 subunit beta (138 aa).

This sequence belongs to the eIF-2-beta/eIF-5 family. In terms of assembly, heterotrimer composed of an alpha, a beta and a gamma chain.

Functionally, eIF-2 functions in the early steps of protein synthesis by forming a ternary complex with GTP and initiator tRNA. This Methanococcus maripaludis (strain C6 / ATCC BAA-1332) protein is Translation initiation factor 2 subunit beta.